The chain runs to 280 residues: F420-dependent methylenetetrahydromethanopterin dehydrogenase (280 aa).

This sequence belongs to the MTD family.

It carries out the reaction 5,10-methylenetetrahydromethanopterin + oxidized coenzyme F420-(gamma-L-Glu)(n) + 2 H(+) = 5,10-methenyl-5,6,7,8-tetrahydromethanopterin + reduced coenzyme F420-(gamma-L-Glu)(n). The protein operates within one-carbon metabolism; methanogenesis from CO(2); 5,10-methylene-5,6,7,8-tetrahydromethanopterin from 5,10-methenyl-5,6,7,8-tetrahydromethanopterin (coenzyme F420 route): step 1/1. Functionally, catalyzes the reversible reduction of methenyl-H(4)MPT(+) to methylene-H(4)MPT. The chain is F420-dependent methylenetetrahydromethanopterin dehydrogenase from Methanoculleus marisnigri (strain ATCC 35101 / DSM 1498 / JR1).